The following is a 481-amino-acid chain: Sialic acid-binding Ig-like lectin 16 (481 aa).

The N-terminal stretch at 1 to 16 (MLLLPLLLPVLGAGSL) is a signal peptide. The Extracellular segment spans residues 17 to 434 (NKDPSYSLQV…VHCKSGPMTG (418 aa)). The Ig-like V-type domain maps to 19–122 (DPSYSLQVQR…DEAWYFFRVE (104 aa)). 4 disulfide bridges follow: Cys37–Cys174, Cys42–Cys102, Cys165–Cys216, and Cys259–Cys306. N-linked (GlcNAc...) asparagine glycans are attached at residues Asn43 and Asn78. Position 120 (Arg120) interacts with N-acetylneuraminate. Ig-like C2-type domains follow at residues 147-232 (PDVY…RTVR), 238-322 (LELQ…LDLS), and 327-424 (PENL…LSFS). N-linked (GlcNAc...) asparagine glycosylation is found at Asn338 and Asn347. The cysteines at positions 363 and 408 are disulfide-linked. A helical membrane pass occupies residues 435–455 (VVLVAVGEVAMKILLLCLCLI). The Cytoplasmic segment spans residues 456 to 481 (LLRVRSCRRKAARAALGMEAADAVTD).

It belongs to the immunoglobulin superfamily. SIGLEC (sialic acid binding Ig-like lectin) family. Expressed in bone marrow, fetal brain, fetal liver, lung and salivary gland. Detected in brain, macrophage, cancerous esophagus and lung at protein level.

Its subcellular location is the membrane. In terms of biological role, putative adhesion molecule that mediates sialic-acid dependent binding to cells. This is Sialic acid-binding Ig-like lectin 16 (SIGLEC16) from Homo sapiens (Human).